A 235-amino-acid polypeptide reads, in one-letter code: Cell division protein FtsQ (235 aa).

Over 1-6 (MERLTR) the chain is Cytoplasmic. A helical transmembrane segment spans residues 7–25 (WLLVMMAMLLAASGLVWFY). Residues 26 to 235 (NSNHLPVKQV…DGLPEKESEE (210 aa)) lie on the Periplasmic side of the membrane. The region spanning 30-99 (LPVKQVSLKG…DTVEVVLTER (70 aa)) is the POTRA domain.

This sequence belongs to the FtsQ/DivIB family. FtsQ subfamily. Part of a complex composed of FtsB, FtsL and FtsQ.

The protein resides in the cell inner membrane. Its function is as follows. Essential cell division protein. May link together the upstream cell division proteins, which are predominantly cytoplasmic, with the downstream cell division proteins, which are predominantly periplasmic. May control correct divisome assembly. The chain is Cell division protein FtsQ from Neisseria meningitidis serogroup B (strain ATCC BAA-335 / MC58).